Reading from the N-terminus, the 154-residue chain is Large ribosomal subunit protein uL22c (154 aa).

This sequence belongs to the universal ribosomal protein uL22 family. Part of the 50S ribosomal subunit.

Its subcellular location is the plastid. It is found in the chloroplast. This protein binds specifically to 23S rRNA. Functionally, the globular domain of the protein is located near the polypeptide exit tunnel on the outside of the subunit, while an extended beta-hairpin is found that lines the wall of the exit tunnel in the center of the 70S ribosome. The polypeptide is Large ribosomal subunit protein uL22c (rpl22) (Jasminum nudiflorum (Winter jasmine)).